The chain runs to 843 residues: Protein translocase subunit SecA (843 aa).

ATP contacts are provided by residues Q91, 109-113, and D498; that span reads GEGKT. Over residues 796 to 825 the composition is skewed to basic and acidic residues; that stretch reads DFGKAEHVSAEDGKEKAKAEPYVKDEHIGR. The tract at residues 796–833 is disordered; the sequence is DFGKAEHVSAEDGKEKAKAEPYVKDEHIGRNDPCPCGS. The Zn(2+) site is built by C829, C831, C840, and H841.

This sequence belongs to the SecA family. As to quaternary structure, monomer and homodimer. Part of the essential Sec protein translocation apparatus which comprises SecA, SecYEG and auxiliary proteins SecDF. Other proteins may also be involved. The cofactor is Zn(2+).

The protein resides in the cell membrane. The protein localises to the cytoplasm. The enzyme catalyses ATP + H2O + cellular proteinSide 1 = ADP + phosphate + cellular proteinSide 2.. Functionally, part of the Sec protein translocase complex. Interacts with the SecYEG preprotein conducting channel. Has a central role in coupling the hydrolysis of ATP to the transfer of proteins into and across the cell membrane, serving as an ATP-driven molecular motor driving the stepwise translocation of polypeptide chains across the membrane. This Staphylococcus saprophyticus subsp. saprophyticus (strain ATCC 15305 / DSM 20229 / NCIMB 8711 / NCTC 7292 / S-41) protein is Protein translocase subunit SecA.